A 342-amino-acid polypeptide reads, in one-letter code: Large ribosomal subunit protein uL3 (342 aa).

It belongs to the universal ribosomal protein uL3 family. As to quaternary structure, part of the 50S ribosomal subunit. Forms a cluster with proteins L14 and L24e.

Functionally, one of the primary rRNA binding proteins, it binds directly near the 3'-end of the 23S rRNA, where it nucleates assembly of the 50S subunit. The sequence is that of Large ribosomal subunit protein uL3 from Pyrobaculum islandicum (strain DSM 4184 / JCM 9189 / GEO3).